A 133-amino-acid chain; its full sequence is Ribosome-binding factor A (133 aa).

This sequence belongs to the RbfA family. As to quaternary structure, monomer. Binds 30S ribosomal subunits, but not 50S ribosomal subunits or 70S ribosomes.

The protein resides in the cytoplasm. One of several proteins that assist in the late maturation steps of the functional core of the 30S ribosomal subunit. Associates with free 30S ribosomal subunits (but not with 30S subunits that are part of 70S ribosomes or polysomes). Required for efficient processing of 16S rRNA. May interact with the 5'-terminal helix region of 16S rRNA. The chain is Ribosome-binding factor A from Synechocystis sp. (strain ATCC 27184 / PCC 6803 / Kazusa).